The chain runs to 561 residues: Carboxylesterase 1F (561 aa).

Positions 1–17 (MFLSTLFLVSLATCVIC) are cleaved as a signal peptide. Cys-87 and Cys-116 are oxidised to a cystine. Ser-221 serves as the catalytic Acyl-ester intermediate. Cys-273 and Cys-284 are oxidised to a cystine. Residues Glu-353 and His-466 each act as charge relay system in the active site. Positions 558–561 (HNEL) match the Prevents secretion from ER motif.

This sequence belongs to the type-B carboxylesterase/lipase family. Expressed in liver, white and brown adipose tissue, kidney, intestine, adrenal, heart and ovary. Not detected in muscle, lung, testis, brain and spleen.

Its subcellular location is the lipid droplet. The protein resides in the cytoplasm. It localises to the cytosol. The protein localises to the endoplasmic reticulum. It is found in the microsome. The enzyme catalyses a carboxylic ester + H2O = an alcohol + a carboxylate + H(+). It carries out the reaction all-trans-retinyl hexadecanoate + H2O = all-trans-retinol + hexadecanoate + H(+). Functionally, involved in the detoxification of xenobiotics and in the activation of ester and amide prodrugs. Hydrolyzes retinyl esters. Hydrolyzes p-nitrophenyl butyrate (PNPB), triacylglycerol and monoacylglycerol. Shows higher activity against PNPB, a short-chain fatty acid ester, than against triolein, a long-chain fatty acid ester. Shows no detectable activity against diacylglycerol, cholesterol ester or phospholipids. May play a role in adipocyte lipolysis. The polypeptide is Carboxylesterase 1F (Mus musculus (Mouse)).